Reading from the N-terminus, the 540-residue chain is Glucose-6-phosphate isomerase (540 aa).

Residue Glu-350 is the Proton donor of the active site. Active-site residues include His-381 and Lys-503.

It belongs to the GPI family.

It is found in the cytoplasm. The enzyme catalyses alpha-D-glucose 6-phosphate = beta-D-fructose 6-phosphate. It participates in carbohydrate biosynthesis; gluconeogenesis. The protein operates within carbohydrate degradation; glycolysis; D-glyceraldehyde 3-phosphate and glycerone phosphate from D-glucose: step 2/4. Its function is as follows. Catalyzes the reversible isomerization of glucose-6-phosphate to fructose-6-phosphate. The protein is Glucose-6-phosphate isomerase of Burkholderia pseudomallei (strain 1106a).